Here is a 413-residue protein sequence, read N- to C-terminus: MAAWEFALGLLTASLWRWARKWRSPVKVKPMLAAVSSLEPQLEQITTDLRDRDRLLEDLPVSFLLLDADNLVLEANRSARVLLALPPEDYCRPLLEVVRSYELDRLVARCRAANAPQTDRWTLTPVNPDPLQVVPQTPRPVQGQAIPLSNGQIGVLIEDRQELVDLAQQRNRWVSDVAHELKTPLTSIRLLAEALRDRLQDEPQVWVDRLLGETQRLGQLVQDLLELSRLEQGPSGLQKLEAVDLVALLTSVRNSLEPLAEPLRLGWAYQGPEQGFVRGDRQRLFRLWLNLVDNAIRHSPSGGCLYVELRQRGDTWICDLYDDGPGFADADLPYLFERFYRGDPSRVRPAAASSSSPGSGLGLAIARQVVEAHQGRISARNHPVTGGAWLRVQLPQEPSLTPALKIGTGRRSG.

Residues 176 to 398 (DVAHELKTPL…WLRVQLPQEP (223 aa)) enclose the Histidine kinase domain. Phosphohistidine; by autocatalysis is present on His179.

Its subcellular location is the cytoplasm. The catalysed reaction is ATP + protein L-histidine = ADP + protein N-phospho-L-histidine.. Its function is as follows. Member of the two-component regulatory system SphR/SphS. Sensory kinase. Is involved in inducible production of alkaline phosphatase in response to phosphate limitation as it is directly involved in the regulation of phoA transcription in response to phosphate limitation. SphS functions as a protein kinase that phosphorylates SphR. This chain is Sensor protein SphS (sphS), found in Synechococcus elongatus (strain ATCC 33912 / PCC 7942 / FACHB-805) (Anacystis nidulans R2).